We begin with the raw amino-acid sequence, 132 residues long: Small ribosomal subunit protein uS8 (132 aa).

Belongs to the universal ribosomal protein uS8 family. Part of the 30S ribosomal subunit. Contacts proteins S5 and S12.

Its function is as follows. One of the primary rRNA binding proteins, it binds directly to 16S rRNA central domain where it helps coordinate assembly of the platform of the 30S subunit. This Borreliella afzelii (strain PKo) (Borrelia afzelii) protein is Small ribosomal subunit protein uS8.